An 810-amino-acid chain; its full sequence is Glycerol-3-phosphate acyltransferase (810 aa).

Residues Cys-305–Ile-310 carry the HXXXXD motif motif.

The protein belongs to the GPAT/DAPAT family.

The protein resides in the cell inner membrane. The catalysed reaction is sn-glycerol 3-phosphate + an acyl-CoA = a 1-acyl-sn-glycero-3-phosphate + CoA. Its pathway is phospholipid metabolism; CDP-diacylglycerol biosynthesis; CDP-diacylglycerol from sn-glycerol 3-phosphate: step 1/3. In Haemophilus influenzae (strain 86-028NP), this protein is Glycerol-3-phosphate acyltransferase.